Consider the following 558-residue polypeptide: Eukaryotic translation initiation factor 3 subunit D (558 aa).

An RNA gate region spans residues 296–310 (EFDLLTVNETSVEPP). Positions 534–558 (DNTFESEGEEEDSDEEEQVKDAFQR) are disordered. Residues 537–551 (FESEGEEEDSDEEEQ) show a composition bias toward acidic residues.

It belongs to the eIF-3 subunit D family. Component of the eukaryotic translation initiation factor 3 (eIF-3) complex.

Its subcellular location is the cytoplasm. Functionally, mRNA cap-binding component of the eukaryotic translation initiation factor 3 (eIF-3) complex, which is involved in protein synthesis of a specialized repertoire of mRNAs and, together with other initiation factors, stimulates binding of mRNA and methionyl-tRNAi to the 40S ribosome. The eIF-3 complex specifically targets and initiates translation of a subset of mRNAs involved in cell proliferation. In the eIF-3 complex, eif3d specifically recognizes and binds the 7-methylguanosine cap of a subset of mRNAs. The protein is Eukaryotic translation initiation factor 3 subunit D of Nasonia vitripennis (Parasitic wasp).